We begin with the raw amino-acid sequence, 164 residues long: Large ribosomal subunit protein uL11 (164 aa).

It belongs to the universal ribosomal protein uL11 family. In terms of assembly, part of the ribosomal stalk of the 50S ribosomal subunit. Interacts with L10 and the large rRNA to form the base of the stalk. L10 forms an elongated spine to which L12 dimers bind in a sequential fashion forming a multimeric L10(L12)X complex.

Its function is as follows. Forms part of the ribosomal stalk which helps the ribosome interact with GTP-bound translation factors. The sequence is that of Large ribosomal subunit protein uL11 from Pyrococcus furiosus (strain ATCC 43587 / DSM 3638 / JCM 8422 / Vc1).